A 1134-amino-acid chain; its full sequence is MPPKTSEAQEAYFKKLEAEFLHCREIATAARRKGYDPSLEVEIPSATDLADRVEVIMGVPGLAAHIRKCEEKMSREEASLQVAADIAEGLVGKFKDEEEAVQCAVRTAVAVLTEGVVAAPLEGISAVKLAKNDDGTEYIKVYFAGPIRSAGGTAEALAVLAADYVRRKTGRAPYKIRDVEVERFVEEIMLYKSIAHLQYTPTDEEIRLIVRNCPVCIDGEPTEQEEVQGYRNLERVETNRVRGGIALVIAEGIILKAPKVKKHVDKLKFDGWEWLDKIIAGSKPAGGENKEEEKKIKPKDKFLADLIAGRPVFGHPSRAGGFRLRYGRSRNTGFATAGIHPASMTIMDDFIATGTQLKVERPGKAAAMVPVDSLEGPTVRLFNGDVVRISDEKTALKVRPDVSQILDNGEIIINYGDFLENNHTFVPSPYVEEWWIQDLEEKTKDKVEVNSPEEAFAVSEKYGVPLHPKYTYMWMDLTTDDVVYLARYISASGMVENGELRLPVEQRSKSLLEILLIPQKVRDNTVILSAEDTYILCRCLGLNPDLSMKNPDAYAGLDSHAWKAVSALCGVTVMDRAPARIGARMGRPEKSKLREMKPPVHVLFPVGEAGGMRRSLQDASAYSKSMTDRIGEIEVEVGRRKCPDCGKMTYMVACECGGHTIPVYGCPDCGISGIEGDCPKCHKPTTPNVKQKIDVKGLYAAALKRVGERDNFEVLKGVQGLISKEKTPEPLEKGILRAKHEVFVFKDGTIRYDMSDVPLTHFIPREIGLSVEKARELGYEKDTYGAPLESPEQVCELRVQDIILSHDASNYLLKVCAFLDDELEKYYGLPRYYNVHEEQDLIGHLVIGLAPHTSAGVLGRIIGFVSSSAGYAHPFFHAAKRRNCDGDEDCVMMLMDGLLNFSLSYLPDRRGGKMDAPLVLSMRIDPKEIDKESHNIDVMARYPKEFYLATREFKAPKDVEKIMDLVSKRLGTPEQYEGFKFTHGTSDIAAGPANSAYKTLGSMEDKLKAQLELGRRLRAVDEKDVAERVINSHFLPDLIGNLRAFSTQQMRCVKCGERYRRPPLTGTCPRCGGGRVILTVHEGAVTKYMDVSLAIAKEYGVPSYTIQRLELLSLSIKSLFENDKSKQTGLADFM.

This sequence belongs to the archaeal DNA polymerase II family. In terms of assembly, heterodimer of a large subunit and a small subunit.

The enzyme catalyses DNA(n) + a 2'-deoxyribonucleoside 5'-triphosphate = DNA(n+1) + diphosphate. It catalyses the reaction Exonucleolytic cleavage in the 3'- to 5'-direction to yield nucleoside 5'-phosphates.. In terms of biological role, possesses two activities: a DNA synthesis (polymerase) and an exonucleolytic activity that degrades single-stranded DNA in the 3'- to 5'-direction. Has a template-primer preference which is characteristic of a replicative DNA polymerase. The sequence is that of DNA polymerase II large subunit from Methanocella arvoryzae (strain DSM 22066 / NBRC 105507 / MRE50).